Consider the following 34-residue polypeptide: Brevinin-2GHa (34 aa).

Cysteines 27 and 33 form a disulfide.

As to expression, expressed by the skin glands.

It is found in the secreted. Functionally, antimicrobial peptide. Active against the Gram-positive bacteria S.aureus FDA209P (MIC=14.9 ug/ml) and B.subtilis ATCC 6633 (MIC&gt;64 ug/ml), but not active against the Gram-negative bacterium E.coli or the fungus C.albicans. The sequence is that of Brevinin-2GHa from Sylvirana guentheri (Gunther's frog).